The following is a 383-amino-acid chain: Acetylornithine deacetylase (383 aa).

H80 contributes to the Zn(2+) binding site. D82 is an active-site residue. D112 is a binding site for Zn(2+). E144 is an active-site residue. Residues E145, E169, and H355 each contribute to the Zn(2+) site.

It belongs to the peptidase M20A family. ArgE subfamily. In terms of assembly, homodimer. Zn(2+) serves as cofactor. The cofactor is Co(2+). It depends on glutathione as a cofactor.

The protein localises to the cytoplasm. The enzyme catalyses N(2)-acetyl-L-ornithine + H2O = L-ornithine + acetate. The protein operates within amino-acid biosynthesis; L-arginine biosynthesis; L-ornithine from N(2)-acetyl-L-ornithine (linear): step 1/1. In terms of biological role, catalyzes the hydrolysis of the amide bond of N(2)-acetylated L-amino acids. Cleaves the acetyl group from N-acetyl-L-ornithine to form L-ornithine, an intermediate in L-arginine biosynthesis pathway, and a branchpoint in the synthesis of polyamines. The protein is Acetylornithine deacetylase of Shigella flexneri.